Reading from the N-terminus, the 863-residue chain is Paramyosin (863 aa).

Positions 1–26 (MSESHVKISRTIIRGTSPSTVRLESP) are nonhelical region. Residues 27–836 (VRELEDLLDL…ERTITIKRTI (810 aa)) adopt a coiled-coil conformation. Positions 837-863 (GGPGSRAVSVVREINSVSRGNRATSIM) are nonhelical region.

It belongs to the paramyosin family. As to quaternary structure, homodimer.

It is found in the cytoplasm. It localises to the myofibril. Its function is as follows. Paramyosin is a major structural component of many thick filaments isolated from invertebrate muscles. The chain is Paramyosin from Echinococcus granulosus (Hydatid tapeworm).